The following is a 339-amino-acid chain: Ribosomal RNA large subunit methyltransferase F (339 aa).

A disordered region spans residues 1–26; sequence MTAPSTPKPQRKKPKTATTAKPVVPR.

It belongs to the methyltransferase superfamily. METTL16/RlmF family.

It localises to the cytoplasm. It carries out the reaction adenosine(1618) in 23S rRNA + S-adenosyl-L-methionine = N(6)-methyladenosine(1618) in 23S rRNA + S-adenosyl-L-homocysteine + H(+). In terms of biological role, specifically methylates the adenine in position 1618 of 23S rRNA. This chain is Ribosomal RNA large subunit methyltransferase F, found in Pseudomonas fluorescens (strain SBW25).